The chain runs to 124 residues: Protein YebF (124 aa).

An N-terminal signal peptide occupies residues 1–27 (MKTCHIINRVGLSGVALLLTVSFTVSA). One can recognise a YebF/Cmi domain in the interval 36-123 (KFISCDNLTK…QQNTISYSEL (88 aa)). C40 and C113 form a disulfide bridge.

The protein belongs to the YebF family.

The protein localises to the secreted. This chain is Protein YebF, found in Photorhabdus laumondii subsp. laumondii (strain DSM 15139 / CIP 105565 / TT01) (Photorhabdus luminescens subsp. laumondii).